Reading from the N-terminus, the 82-residue chain is MSHTVKIYDTCIGCTQCVRACPTDVLEMVPWDGCKSGQIASSPRVEDCVGCKRCETACPTDFLSVRVYLGRLETTRSLGLAY.

2 4Fe-4S ferredoxin-type domains span residues 2–31 and 37–68; these read SHTV…MVPW and GQIA…VRVY. [4Fe-4S] cluster-binding residues include Cys-11, Cys-14, Cys-17, Cys-21, Cys-48, Cys-51, Cys-54, and Cys-58.

As to quaternary structure, the eukaryotic PSI reaction center is composed of at least 11 subunits. The cofactor is [4Fe-4S] cluster.

The protein localises to the plastid. It localises to the chloroplast thylakoid membrane. The enzyme catalyses reduced [plastocyanin] + hnu + oxidized [2Fe-2S]-[ferredoxin] = oxidized [plastocyanin] + reduced [2Fe-2S]-[ferredoxin]. Functionally, apoprotein for the two 4Fe-4S centers FA and FB of photosystem I (PSI); essential for photochemical activity. FB is the terminal electron acceptor of PSI, donating electrons to ferredoxin. The C-terminus interacts with PsaA/B/D and helps assemble the protein into the PSI complex. Required for binding of PsaD and PsaE to PSI. PSI is a plastocyanin/cytochrome c6-ferredoxin oxidoreductase, converting photonic excitation into a charge separation, which transfers an electron from the donor P700 chlorophyll pair to the spectroscopically characterized acceptors A0, A1, FX, FA and FB in turn. The polypeptide is Photosystem I iron-sulfur center (Trieres chinensis (Marine centric diatom)).